A 627-amino-acid polypeptide reads, in one-letter code: DNA-directed RNA polymerase subunit gamma (627 aa).

4 residues coordinate Zn(2+): cysteine 70, cysteine 72, cysteine 85, and cysteine 88. Mg(2+) contacts are provided by aspartate 468, aspartate 470, and aspartate 472.

It belongs to the RNA polymerase beta' chain family. RpoC1 subfamily. As to quaternary structure, in cyanobacteria the RNAP catalytic core is composed of 2 alpha, 1 beta, 1 beta', 1 gamma and 1 omega subunit. When a sigma factor is associated with the core the holoenzyme is formed, which can initiate transcription. Mg(2+) is required as a cofactor. Zn(2+) serves as cofactor.

It carries out the reaction RNA(n) + a ribonucleoside 5'-triphosphate = RNA(n+1) + diphosphate. Its function is as follows. DNA-dependent RNA polymerase catalyzes the transcription of DNA into RNA using the four ribonucleoside triphosphates as substrates. The chain is DNA-directed RNA polymerase subunit gamma from Synechococcus sp. (strain JA-3-3Ab) (Cyanobacteria bacterium Yellowstone A-Prime).